We begin with the raw amino-acid sequence, 286 residues long: 4-diphosphocytidyl-2-C-methyl-D-erythritol kinase (286 aa).

The active site involves Lys-11. 94–104 is an ATP binding site; the sequence is PMGGGIGGGSS. Residue Asp-136 is part of the active site.

The protein belongs to the GHMP kinase family. IspE subfamily.

It catalyses the reaction 4-CDP-2-C-methyl-D-erythritol + ATP = 4-CDP-2-C-methyl-D-erythritol 2-phosphate + ADP + H(+). It participates in isoprenoid biosynthesis; isopentenyl diphosphate biosynthesis via DXP pathway; isopentenyl diphosphate from 1-deoxy-D-xylulose 5-phosphate: step 3/6. In terms of biological role, catalyzes the phosphorylation of the position 2 hydroxy group of 4-diphosphocytidyl-2C-methyl-D-erythritol. This is 4-diphosphocytidyl-2-C-methyl-D-erythritol kinase from Pseudomonas putida (strain ATCC 700007 / DSM 6899 / JCM 31910 / BCRC 17059 / LMG 24140 / F1).